Consider the following 370-residue polypeptide: Biotin synthase (370 aa).

Positions 50-276 (FSDGTVDACS…IAVYRFLHPE (227 aa)) constitute a Radical SAM core domain. Positions 68, 72, and 75 each coordinate [4Fe-4S] cluster. [2Fe-2S] cluster is bound by residues cysteine 208 and arginine 280. A disordered region spans residues 328-370 (AGLEPNREANTFDPESVKARHRSPAAETASNANRTNATTETDD). Residues 352-370 (AAETASNANRTNATTETDD) are compositionally biased toward low complexity.

It belongs to the radical SAM superfamily. Biotin synthase family. As to quaternary structure, homodimer. It depends on [4Fe-4S] cluster as a cofactor. The cofactor is [2Fe-2S] cluster.

It carries out the reaction (4R,5S)-dethiobiotin + (sulfur carrier)-SH + 2 reduced [2Fe-2S]-[ferredoxin] + 2 S-adenosyl-L-methionine = (sulfur carrier)-H + biotin + 2 5'-deoxyadenosine + 2 L-methionine + 2 oxidized [2Fe-2S]-[ferredoxin]. The protein operates within cofactor biosynthesis; biotin biosynthesis; biotin from 7,8-diaminononanoate: step 2/2. Its function is as follows. Catalyzes the conversion of dethiobiotin (DTB) to biotin by the insertion of a sulfur atom into dethiobiotin via a radical-based mechanism. This chain is Biotin synthase, found in Natronomonas pharaonis (strain ATCC 35678 / DSM 2160 / CIP 103997 / JCM 8858 / NBRC 14720 / NCIMB 2260 / Gabara) (Halobacterium pharaonis).